The chain runs to 349 residues: Isopentenyl-diphosphate delta-isomerase (349 aa).

Residue 9-10 coordinates substrate; the sequence is RK. FMN-binding positions include 65 to 67, S95, and N124; that span reads AMT. 95 to 97 contributes to the substrate binding site; that stretch reads STH. Q154 is a binding site for substrate. Residue E155 participates in Mg(2+) binding. FMN contacts are provided by residues K186, S211, T216, 262-264, and 283-284; these read GLR and SR.

This sequence belongs to the IPP isomerase type 2 family. Homooctamer. Dimer of tetramers. It depends on FMN as a cofactor. The cofactor is NADPH. Mg(2+) is required as a cofactor.

The protein localises to the cytoplasm. The enzyme catalyses isopentenyl diphosphate = dimethylallyl diphosphate. Functionally, involved in the biosynthesis of isoprenoids. Catalyzes the 1,3-allylic rearrangement of the homoallylic substrate isopentenyl (IPP) to its allylic isomer, dimethylallyl diphosphate (DMAPP). This chain is Isopentenyl-diphosphate delta-isomerase, found in Staphylococcus aureus (strain MSSA476).